Reading from the N-terminus, the 867-residue chain is Protein translocase subunit SecA (867 aa).

ATP contacts are provided by residues Gln-85, 103-107 (GEGKT), and Asp-491.

It belongs to the SecA family. Monomer and homodimer. Part of the essential Sec protein translocation apparatus which comprises SecA, SecYEG and auxiliary proteins SecDF. Other proteins may also be involved.

The protein localises to the cell membrane. It localises to the cytoplasm. The enzyme catalyses ATP + H2O + cellular proteinSide 1 = ADP + phosphate + cellular proteinSide 2.. Functionally, part of the Sec protein translocase complex. Interacts with the SecYEG preprotein conducting channel. Has a central role in coupling the hydrolysis of ATP to the transfer of proteins into and across the cell membrane, serving as an ATP-driven molecular motor driving the stepwise translocation of polypeptide chains across the membrane. This is Protein translocase subunit SecA from Mycoplasmopsis pulmonis (strain UAB CTIP) (Mycoplasma pulmonis).